Here is a 72-residue protein sequence, read N- to C-terminus: Translation initiation factor IF-1 (72 aa).

One can recognise an S1-like domain in the interval 2–72 (AKDDVIEVEG…TRGRITYRYK (71 aa)). Tyr-60 is subject to Phosphotyrosine.

The protein belongs to the IF-1 family. As to quaternary structure, component of the 30S ribosomal translation pre-initiation complex which assembles on the 30S ribosome in the order IF-2 and IF-3, IF-1 and N-formylmethionyl-tRNA(fMet); mRNA recruitment can occur at any time during PIC assembly.

It is found in the cytoplasm. Functionally, one of the essential components for the initiation of protein synthesis. Stabilizes the binding of IF-2 and IF-3 on the 30S subunit to which N-formylmethionyl-tRNA(fMet) subsequently binds. Helps modulate mRNA selection, yielding the 30S pre-initiation complex (PIC). Upon addition of the 50S ribosomal subunit IF-1, IF-2 and IF-3 are released leaving the mature 70S translation initiation complex. The protein is Translation initiation factor IF-1 of Bacillus subtilis (strain 168).